The primary structure comprises 911 residues: Translation initiation factor IF-2 (911 aa).

Composition is skewed to basic and acidic residues over residues Leu-80–Leu-94 and Arg-101–Val-113. Disordered stretches follow at residues Leu-80–Pro-142, Val-153–Gly-172, and Ser-195–Lys-309. Positions Lys-214–Thr-256 are enriched in basic and acidic residues. Basic residues predominate over residues Ala-262–Lys-272. A compositionally biased stretch (basic and acidic residues) spans Pro-273–Ile-284. The span at Ser-286–Ser-300 shows a compositional bias: low complexity. Residues Ile-408–Lys-578 enclose the tr-type G domain. The segment at Gly-417–Thr-424 is G1. Residue Gly-417 to Thr-424 coordinates GTP. The interval Gly-442 to His-446 is G2. The G3 stretch occupies residues Asp-464–Gly-467. GTP is bound by residues Asp-464–His-468 and Asn-518–Asp-521. The segment at Asn-518 to Asp-521 is G4. A G5 region spans residues Ser-554–Lys-556.

Belongs to the TRAFAC class translation factor GTPase superfamily. Classic translation factor GTPase family. IF-2 subfamily.

Its subcellular location is the cytoplasm. Functionally, one of the essential components for the initiation of protein synthesis. Protects formylmethionyl-tRNA from spontaneous hydrolysis and promotes its binding to the 30S ribosomal subunits. Also involved in the hydrolysis of GTP during the formation of the 70S ribosomal complex. This chain is Translation initiation factor IF-2, found in Chlorobium phaeobacteroides (strain BS1).